The chain runs to 432 residues: Enolase (432 aa).

Residue Gln163 coordinates (2R)-2-phosphoglycerate. Glu205 serves as the catalytic Proton donor. Asp242, Glu287, and Asp314 together coordinate Mg(2+). (2R)-2-phosphoglycerate-binding residues include Lys339, Arg368, Ser369, and Lys390. The Proton acceptor role is filled by Lys339.

The protein belongs to the enolase family. The cofactor is Mg(2+).

It localises to the cytoplasm. It is found in the secreted. The protein resides in the cell surface. The catalysed reaction is (2R)-2-phosphoglycerate = phosphoenolpyruvate + H2O. It functions in the pathway carbohydrate degradation; glycolysis; pyruvate from D-glyceraldehyde 3-phosphate: step 4/5. Its function is as follows. Catalyzes the reversible conversion of 2-phosphoglycerate (2-PG) into phosphoenolpyruvate (PEP). It is essential for the degradation of carbohydrates via glycolysis. The sequence is that of Enolase from Myxococcus xanthus (strain DK1622).